Here is a 1830-residue protein sequence, read N- to C-terminus: Guanine nucleotide exchange factor SPIKE 1 (1830 aa).

An N-acetylmethionine modification is found at methionine 1. The tract at residues 285 to 304 is disordered; the sequence is NTGESASPSSPLAPSMTASS. Low complexity predominate over residues 289 to 304; that stretch reads SASPSSPLAPSMTASS. The C2 DOCK-type domain occupies 463 to 622; the sequence is FHCLYVYPVA…NIFKLRLRLC (160 aa). Phosphoserine is present on serine 1051. A Phosphothreonine modification is found at threonine 1079. Serine 1095 is modified (phosphoserine). The 450-residue stretch at 1379–1828 folds into the DOCKER domain; the sequence is MAFAPVPDLH…LSHYIPAILS (450 aa).

Belongs to the DOCK family. Homodimer. Component of SCAR/WAVE and ARP2/3 complexes. Interacts directly with ARAC4/ROP2, ARAC1/ROP3, ARAC5/ROP4, ARAC6/ROP5, ARAC8/ROP10, ARAC9/ROP8, SCAR1, SCAR2, SCAR3, SCAR4, ABI1, ABI2, ABI3 and ABI4. Binds to the inactive GDP-bound form of ARAC3/ROP6. As to expression, expressed ubiquitously, in roots and aerial organs.

The protein localises to the cytoplasm. Its subcellular location is the endoplasmic reticulum membrane. The protein resides in the nucleus. In terms of biological role, guanine nucleotide exchange factor (GEF) for Rho and Rac. GEF proteins activate small GTPases by exchanging bound GDP for free GTP. Controls actin polymerization via the two heteromeric complexes WAVE and actin-related protein (ARP) 2/3. Involved in cytoskeletal reorganization required for cell shape (e.g. trichome and cotyledon) control and tissue development. Prevents cortical microtubules organization into parallel arrays oriented perpendicular to the axis of cell elongation to limit anisotropic cell growth during petal development, probably by triggering ARAC4/ROP2 and ARAC3/ROP6 activity. Promotes polarized growth and cell-cell adhesion in the leaf epidermis probably by promoting the formation of endoplasmic reticulum (ER) exit site (ERES) and/or trafficking between the ER and Golgi. Triggers ARAC3/ROP6 activation required for auxin-mediated inhibition of PIN2 internalization during gravitropic responses (, PubMed:22683260). This Arabidopsis thaliana (Mouse-ear cress) protein is Guanine nucleotide exchange factor SPIKE 1.